The chain runs to 439 residues: Polygalacturonase QRT2 (439 aa).

The first 21 residues, 1–21 (MYEKIIILSVFLLTFLPSCFS), serve as a signal peptide directing secretion. The segment at 43 to 69 (RQHQHGHNTRNSHLKNRHGYAPRSSPR) is disordered. The span at 44-62 (QHQHGHNTRNSHLKNRHGY) shows a compositional bias: basic residues. PbH1 repeat units lie at residues 201-250 (CNNL…HVSG) and 251-272 (TQNI…SIVS). Asp265 serves as the catalytic Proton donor. His288 is an active-site residue. PbH1 repeat units follow at residues 304-325 (VSNV…RIKT) and 333-354 (AKNI…IINQ).

The protein belongs to the glycosyl hydrolase 28 family. As to expression, expressed predominantly in roots with lower expression levels in rosette leaves, flower buds and siliques. Bearly detected in seeds. Found in flowers undergoing floral organ abscission. Also expressed early in anther development, at the time of microspore separation.

Its subcellular location is the secreted. It localises to the cell wall. The enzyme catalyses (1,4-alpha-D-galacturonosyl)n+m + H2O = (1,4-alpha-D-galacturonosyl)n + (1,4-alpha-D-galacturonosyl)m.. Polygalacturonase required for cell type-specific pectin degradation to separate microspores. Involved in anther dehiscence and floral organ abscission. This is Polygalacturonase QRT2 (QRT2) from Arabidopsis thaliana (Mouse-ear cress).